A 206-amino-acid chain; its full sequence is Probable GTP-binding protein EngB (206 aa).

Positions Asp-7 to Asp-195 constitute an EngB-type G domain. GTP-binding positions include Gly-15–Ser-22, Gly-41–Ser-45, Asp-60–Gly-63, Asn-140–Asp-143, and Ile-175–Ala-177. The Mg(2+) site is built by Ser-22 and Thr-43.

Belongs to the TRAFAC class TrmE-Era-EngA-EngB-Septin-like GTPase superfamily. EngB GTPase family. The cofactor is Mg(2+).

In terms of biological role, necessary for normal cell division and for the maintenance of normal septation. The protein is Probable GTP-binding protein EngB of Haloquadratum walsbyi (strain DSM 16790 / HBSQ001).